A 670-amino-acid chain; its full sequence is DNA ligase (670 aa).

NAD(+) contacts are provided by residues 34–38 (DFEFD), 83–84 (SL), and glutamate 113. The active-site N6-AMP-lysine intermediate is the lysine 115. NAD(+) is bound by residues arginine 136, glutamate 173, lysine 288, and lysine 312. Cysteine 406, cysteine 409, cysteine 424, and cysteine 430 together coordinate Zn(2+). Residues 591-670 (PESDKFAGKS…EAEFISLLNS (80 aa)) form the BRCT domain.

Belongs to the NAD-dependent DNA ligase family. LigA subfamily. It depends on Mg(2+) as a cofactor. Mn(2+) is required as a cofactor.

The enzyme catalyses NAD(+) + (deoxyribonucleotide)n-3'-hydroxyl + 5'-phospho-(deoxyribonucleotide)m = (deoxyribonucleotide)n+m + AMP + beta-nicotinamide D-nucleotide.. Functionally, DNA ligase that catalyzes the formation of phosphodiester linkages between 5'-phosphoryl and 3'-hydroxyl groups in double-stranded DNA using NAD as a coenzyme and as the energy source for the reaction. It is essential for DNA replication and repair of damaged DNA. In Cytophaga hutchinsonii (strain ATCC 33406 / DSM 1761 / CIP 103989 / NBRC 15051 / NCIMB 9469 / D465), this protein is DNA ligase.